The chain runs to 250 residues: Agamous-like MADS-box protein AGL8 homolog (250 aa).

In terms of domain architecture, MADS-box spans 3 to 57; it reads RGRVQLKRIENKINRQVTFSKRRSGLLKKAHEISVLCDAEVGLIVFSTKGKLFEY. The 91-residue stretch at 88–178 folds into the K-box domain; the sequence is PGSWTLENAK…SKKVKEREKE (91 aa). Disordered stretches follow at residues 162-191 and 206-241; these read QEQN…QNHE and PHLG…TVMP. Over residues 171 to 180 the composition is skewed to basic and acidic residues; sequence KVKEREKEVE. Polar residues-rich tracts occupy residues 181–191 and 226–240; these read QQNQWDQQNHE and GNSS…NTVM.

It is found in the nucleus. Probable transcription factor. This is Agamous-like MADS-box protein AGL8 homolog (SCM1) from Solanum commersonii (Commerson's wild potato).